A 232-amino-acid polypeptide reads, in one-letter code: Large ribosomal subunit protein uL1 (232 aa).

This sequence belongs to the universal ribosomal protein uL1 family. As to quaternary structure, part of the 50S ribosomal subunit.

Functionally, binds directly to 23S rRNA. The L1 stalk is quite mobile in the ribosome, and is involved in E site tRNA release. Protein L1 is also a translational repressor protein, it controls the translation of the L11 operon by binding to its mRNA. In Variovorax paradoxus (strain S110), this protein is Large ribosomal subunit protein uL1.